The chain runs to 196 residues: Leucyl/phenylalanyl-tRNA--protein transferase (196 aa).

Belongs to the L/F-transferase family.

Its subcellular location is the cytoplasm. The enzyme catalyses N-terminal L-lysyl-[protein] + L-leucyl-tRNA(Leu) = N-terminal L-leucyl-L-lysyl-[protein] + tRNA(Leu) + H(+). It catalyses the reaction N-terminal L-arginyl-[protein] + L-leucyl-tRNA(Leu) = N-terminal L-leucyl-L-arginyl-[protein] + tRNA(Leu) + H(+). It carries out the reaction L-phenylalanyl-tRNA(Phe) + an N-terminal L-alpha-aminoacyl-[protein] = an N-terminal L-phenylalanyl-L-alpha-aminoacyl-[protein] + tRNA(Phe). Functions in the N-end rule pathway of protein degradation where it conjugates Leu, Phe and, less efficiently, Met from aminoacyl-tRNAs to the N-termini of proteins containing an N-terminal arginine or lysine. The polypeptide is Leucyl/phenylalanyl-tRNA--protein transferase (Thermosynechococcus vestitus (strain NIES-2133 / IAM M-273 / BP-1)).